Reading from the N-terminus, the 365-residue chain is Class I histocompatibility antigen, Gogo-A*0201 alpha chain (365 aa).

The N-terminal stretch at 1–24 (MAVMAPRTLLLLLLGALALTQTWA) is a signal peptide. The segment at 25-114 (GSHSMRYFST…LRGYYNQSEA (90 aa)) is alpha-1. The Extracellular portion of the chain corresponds to 25 to 308 (GSHSMRYFST…EPSSQPTIPI (284 aa)). N-linked (GlcNAc...) asparagine glycosylation is present at Asn110. Residues 115–206 (GSHTIQKMYG…ENGKETLQRT (92 aa)) form an alpha-2 region. Disulfide bonds link Cys125–Cys188 and Cys227–Cys283. An alpha-3 region spans residues 207–298 (DAPKTHMTHH…SLPKPLTLRW (92 aa)). The region spanning 209–295 (PKTHMTHHAV…QHESLPKPLT (87 aa)) is the Ig-like C1-type domain. Residues 299-308 (EPSSQPTIPI) are connecting peptide. A helical transmembrane segment spans residues 309–332 (VGIIAGLVLFGAVIAGAVIAAVRW). The Cytoplasmic portion of the chain corresponds to 333 to 365 (RRKSSDRKGGSYSQAASSDSAQGSDVSLTACKV). Positions 338–365 (DRKGGSYSQAASSDSAQGSDVSLTACKV) are disordered. Residues 342–359 (GSYSQAASSDSAQGSDVS) are compositionally biased toward low complexity. Ser343 carries the post-translational modification Phosphoserine. Tyr344 carries the phosphotyrosine modification. 6 positions are modified to phosphoserine: Ser345, Ser349, Ser350, Ser352, Ser356, and Ser359.

It belongs to the MHC class I family. In terms of assembly, heterodimer of an alpha chain and a beta chain (beta-2-microglobulin).

Its subcellular location is the membrane. In terms of biological role, involved in the presentation of foreign antigens to the immune system. This is Class I histocompatibility antigen, Gogo-A*0201 alpha chain from Gorilla gorilla gorilla (Western lowland gorilla).